Here is a 516-residue protein sequence, read N- to C-terminus: Probable fucosyltransferase 8 (516 aa).

The chain crosses the membrane as a helical; Signal-anchor for type II membrane protein span at residues 5–25 (ITVVTCLFLLSVMQLSFFNIF). At 26–516 (NYQLLDATTN…ITGLKLVDSN (491 aa)) the chain is on the lumenal side. N-linked (GlcNAc...) asparagine glycans are attached at residues Asn-35, Asn-116, Asn-211, Asn-362, and Asn-463.

The protein belongs to the glycosyltransferase 37 family. As to expression, expressed in leaves and stems.

Its subcellular location is the golgi apparatus. The protein resides in the golgi stack membrane. It functions in the pathway protein modification; protein glycosylation. May be involved in cell wall biosynthesis. May act as a fucosyltransferase. The sequence is that of Probable fucosyltransferase 8 (FUT8) from Arabidopsis thaliana (Mouse-ear cress).